The sequence spans 247 residues: Phycobilisome rod-core linker polypeptide CpcG2 (247 aa).

In terms of domain architecture, PBS-linker spans 11-189; the sequence is SSQNQRVPGY…YWRDKLESER (179 aa). The interval 223-247 is disordered; the sequence is PDTTRNTTPTGIPISVNPSANFPVR.

Belongs to the phycobilisome linker protein family. Part of the phycobilisome, a hemidiscoidal structure that is composed of two distinct substructures: a core complex and a number of rods radiating from the core.

The protein localises to the cellular thylakoid membrane. Its function is as follows. Rod-core linker protein required for attachment of phycocyanin to allophycocyanin in cores of phycobilisomes. In terms of biological role, linker polypeptides determine the state of aggregation and the location of the disk-shaped phycobiliprotein units within the phycobilisome and modulate their spectroscopic properties in order to mediate a directed and optimal energy transfer. The polypeptide is Phycobilisome rod-core linker polypeptide CpcG2 (Nostoc sp. (strain PCC 7120 / SAG 25.82 / UTEX 2576)).